The chain runs to 398 residues: NADH-quinone oxidoreductase subunit D (398 aa).

This sequence belongs to the complex I 49 kDa subunit family. As to quaternary structure, NDH-1 is composed of 14 different subunits. Subunits NuoB, C, D, E, F, and G constitute the peripheral sector of the complex.

It localises to the cell inner membrane. The catalysed reaction is a quinone + NADH + 5 H(+)(in) = a quinol + NAD(+) + 4 H(+)(out). NDH-1 shuttles electrons from NADH, via FMN and iron-sulfur (Fe-S) centers, to quinones in the respiratory chain. The immediate electron acceptor for the enzyme in this species is believed to be ubiquinone. Couples the redox reaction to proton translocation (for every two electrons transferred, four hydrogen ions are translocated across the cytoplasmic membrane), and thus conserves the redox energy in a proton gradient. This is NADH-quinone oxidoreductase subunit D from Anaplasma marginale (strain St. Maries).